The primary structure comprises 149 residues: Deoxyuridine 5'-triphosphate nucleotidohydrolase (149 aa).

Substrate contacts are provided by residues 68 to 70 (RSG), asparagine 81, 85 to 87 (LID), and methionine 95.

This sequence belongs to the dUTPase family. Mg(2+) serves as cofactor.

It catalyses the reaction dUTP + H2O = dUMP + diphosphate + H(+). The protein operates within pyrimidine metabolism; dUMP biosynthesis; dUMP from dCTP (dUTP route): step 2/2. Its function is as follows. This enzyme is involved in nucleotide metabolism: it produces dUMP, the immediate precursor of thymidine nucleotides and it decreases the intracellular concentration of dUTP so that uracil cannot be incorporated into DNA. In Polynucleobacter necessarius subsp. necessarius (strain STIR1), this protein is Deoxyuridine 5'-triphosphate nucleotidohydrolase.